The primary structure comprises 402 residues: Oligopeptide transport ATP-binding protein OppD (402 aa).

Positions 22–309 (LDITDLHVNF…PLHPYTWALI (288 aa)) constitute an ABC transporter domain. Position 58 to 65 (58 to 65 (GESGSGKS)) interacts with ATP.

It belongs to the ABC transporter superfamily. In terms of assembly, the complex is composed of two ATP-binding proteins (OppD and OppF), two transmembrane proteins (OppB and OppC) and a solute-binding protein (OppA).

The protein localises to the cell membrane. The enzyme catalyses a [peptide](out) + ATP + H2O = a [peptide](in) + ADP + phosphate + H(+). Its function is as follows. Part of the ABC transporter complex OppABCDF involved in the uptake of oligopeptides. Probably responsible for energy coupling to the transport system. The polypeptide is Oligopeptide transport ATP-binding protein OppD (oppD) (Mycoplasma genitalium (strain ATCC 33530 / DSM 19775 / NCTC 10195 / G37) (Mycoplasmoides genitalium)).